Here is a 206-residue protein sequence, read N- to C-terminus: Ras-related protein RABG3a (206 aa).

Gly15–Thr22 lines the GTP pocket. The Effector region signature appears at Tyr37–Phe45. GTP contacts are provided by residues Asp63–Gln67, Asn125–Asp128, and Ser158–Ala159. Residues Cys204 and Cys206 are each lipidated (S-geranylgeranyl cysteine). Position 206 is a cysteine methyl ester (Cys206).

Belongs to the small GTPase superfamily. Rab family.

Its subcellular location is the cell membrane. Functionally, intracellular vesicle trafficking and protein transport. The polypeptide is Ras-related protein RABG3a (RABG3A) (Arabidopsis thaliana (Mouse-ear cress)).